We begin with the raw amino-acid sequence, 186 residues long: Large ribosomal subunit protein uL22 (186 aa).

Positions 159 to 186 (KATDEEPTKKKLSKKKLQRQKEKMMRSE) are disordered. Residues 177–186 (RQKEKMMRSE) are compositionally biased toward basic and acidic residues.

This sequence belongs to the universal ribosomal protein uL22 family.

This chain is Large ribosomal subunit protein uL22 (RpL17), found in Phlebotomus papatasi (Sandfly).